The following is a 159-amino-acid chain: uncharacterized protein (159 aa).

The interval Met-1–Tyr-139 is disordered. Residues Arg-9–Ala-31 are compositionally biased toward polar residues. Residues Gln-65–Gly-82 show a composition bias toward basic and acidic residues. The segment covering Arg-105 to His-119 has biased composition (polar residues). Residues Ala-125 to Glu-134 are compositionally biased toward basic and acidic residues.

This is an uncharacterized protein from Homo sapiens (Human).